The following is a 340-amino-acid chain: Arginase 1, mitochondrial (340 aa).

The N-terminal 24 residues, 1-24 (MGGVAAGTRWIHHVRRLSAAKVSA), are a transit peptide targeting the mitochondrion. Mn(2+)-binding residues include His159, Asp183, His185, and Asp187. Substrate is bound by residues 185–189 (HPDIY) and 193–195 (EGN). Asp268 and Asp270 together coordinate Mn(2+). Position 311 (Glu311) interacts with substrate.

The protein belongs to the arginase family. Mn(2+) serves as cofactor.

It localises to the mitochondrion. The enzyme catalyses L-arginine + H2O = urea + L-ornithine. Its pathway is nitrogen metabolism; urea cycle; L-ornithine and urea from L-arginine: step 1/1. Catalyzes the hydrolysis of L-arginine to urea and L-ornithine. The latter can be utilized in the urea cycle or as a precursor for the synthesis of both polyamines and proline. This chain is Arginase 1, mitochondrial (ARG1), found in Oryza sativa subsp. japonica (Rice).